The following is a 264-amino-acid chain: Stage 0 sporulation protein A (264 aa).

Positions 5–123 constitute a Response regulatory domain; that stretch reads KVCLVDDNKE…NLTSHIRQVS (119 aa). Ca(2+) is bound by residues Asp10, Asp11, and Asp56. 4-aspartylphosphate is present on Asp56. A DNA-binding region (H-T-H motif) is located at residues 196 to 215; it reads PDIAKKYNTTASRVERAIRH.

Requires Ca(2+) as cofactor. In terms of processing, phosphorylated by KinA and KinB.

The protein resides in the cytoplasm. May play the central regulatory role in sporulation. It may be an element of the effector pathway responsible for the activation of sporulation genes in response to nutritional stress. Spo0A may act in concert with Spo0H (a sigma factor) to control the expression of some genes that are critical to the sporulation process. Repressor of abrB, activator of the spoIIa operon. Binds the DNA sequence 5'-TGNCGAA-3' (0A box). The chain is Stage 0 sporulation protein A (spo0A) from Bacillus anthracis.